Here is a 336-residue protein sequence, read N- to C-terminus: Speedy protein E1 (336 aa).

Residues 16-50 (GVDPSPPCRSLGWKRKREWSDESEEEPEKELAPEP) form a disordered region. Acidic residues predominate over residues 36-50 (DESEEEPEKELAPEP).

This sequence belongs to the Speedy/Ringo family. Predominantly expressed in testis and heart.

The sequence is that of Speedy protein E1 from Homo sapiens (Human).